Consider the following 284-residue polypeptide: uncharacterized protein (284 aa).

Belongs to the methyltransferase superfamily.

The protein resides in the cytoplasm. The protein localises to the nucleus. In terms of biological role, probable methyltransferase. This is an uncharacterized protein from Schizosaccharomyces pombe (strain 972 / ATCC 24843) (Fission yeast).